The following is a 272-amino-acid chain: Glutamate racemase (272 aa).

Substrate-binding positions include 10-11 (DS) and 42-43 (YG). The active-site Proton donor/acceptor is the Cys74. Residue 75 to 76 (NT) coordinates substrate. Cys185 (proton donor/acceptor) is an active-site residue. 186-187 (TH) is a substrate binding site.

This sequence belongs to the aspartate/glutamate racemases family.

The catalysed reaction is L-glutamate = D-glutamate. Its pathway is cell wall biogenesis; peptidoglycan biosynthesis. Its function is as follows. Provides the (R)-glutamate required for cell wall biosynthesis. The sequence is that of Glutamate racemase from Bacillus pumilus (strain SAFR-032).